The sequence spans 99 residues: Integration host factor subunit alpha (99 aa).

It belongs to the bacterial histone-like protein family. In terms of assembly, heterodimer of an alpha and a beta chain.

This protein is one of the two subunits of integration host factor, a specific DNA-binding protein that functions in genetic recombination as well as in transcriptional and translational control. This Psychrobacter arcticus (strain DSM 17307 / VKM B-2377 / 273-4) protein is Integration host factor subunit alpha.